The primary structure comprises 371 residues: Palmitoyl-monogalactosyldiacylglycerol delta-7 desaturase, chloroplastic (371 aa).

The transit peptide at 1–67 directs the protein to the chloroplast; sequence MASLLTKPKP…KGLKRDVTTA (67 aa). A run of 2 helical transmembrane segments spans residues 103-123 and 127-147; these read FGAVAVVLSMHLLSLLAPFQF and AVSVAFGLYIVTGLLGITLSF. A Histidine box-1 motif is present at residues 148 to 153; it reads HRNLSH. Positions 185-189 match the Histidine box-2 motif; it reads HRYHH. Residues 251-271 form a helical membrane-spanning segment; sequence ALAVALYAMGGFPFIVWGMGV. The Histidine box-3 motif lies at 317–321; the sequence is HNNHH.

Belongs to the fatty acid desaturase type 1 family. It depends on Fe(2+) as a cofactor. Highly expressed in young leaves. Low expression in roots.

Its subcellular location is the plastid. It localises to the chloroplast membrane. It catalyses the reaction a 1-acyl-2-hexadecanoyl-glycerolipid + 2 reduced [2Fe-2S]-[ferredoxin] + O2 + 2 H(+) = a 1-acyl-2-[(7Z)-hexadecenoyl]-glycerolipid + 2 oxidized [2Fe-2S]-[ferredoxin] + 2 H2O. It functions in the pathway lipid metabolism; oxylipin biosynthesis. Its pathway is lipid metabolism; polyunsaturated fatty acid biosynthesis. In terms of biological role, fatty acid desaturase involved in the first desaturation step leading to the formation of hexadeca 7,10,13-trienoic acid (16:3(7Z,10Z,13Z)), the major functional components of thylakoid membranes. Required for chloroplast biogenesis at low temperature. Also indirectly involved in the production of the oxylipin dinor-oxo-phyto-dienoic acid implicated in wound signaling. This Arabidopsis thaliana (Mouse-ear cress) protein is Palmitoyl-monogalactosyldiacylglycerol delta-7 desaturase, chloroplastic.